The sequence spans 265 residues: Thiazole synthase (265 aa).

The active-site Schiff-base intermediate with DXP is the Lys-106. Residues Gly-167, 193–194 (AG), and 215–216 (NS) each bind 1-deoxy-D-xylulose 5-phosphate.

It belongs to the ThiG family. In terms of assembly, homotetramer. Forms heterodimers with either ThiH or ThiS.

Its subcellular location is the cytoplasm. It carries out the reaction [ThiS sulfur-carrier protein]-C-terminal-Gly-aminoethanethioate + 2-iminoacetate + 1-deoxy-D-xylulose 5-phosphate = [ThiS sulfur-carrier protein]-C-terminal Gly-Gly + 2-[(2R,5Z)-2-carboxy-4-methylthiazol-5(2H)-ylidene]ethyl phosphate + 2 H2O + H(+). It participates in cofactor biosynthesis; thiamine diphosphate biosynthesis. Its function is as follows. Catalyzes the rearrangement of 1-deoxy-D-xylulose 5-phosphate (DXP) to produce the thiazole phosphate moiety of thiamine. Sulfur is provided by the thiocarboxylate moiety of the carrier protein ThiS. In vitro, sulfur can be provided by H(2)S. The polypeptide is Thiazole synthase (Prochlorococcus marinus (strain MIT 9515)).